We begin with the raw amino-acid sequence, 228 residues long: Phosphoribosylformylglycinamidine synthase subunit PurQ (228 aa).

In terms of domain architecture, Glutamine amidotransferase type-1 spans 3–225; it reads FAVLVFPGSN…LTTLKSGVVT (223 aa). The active-site Nucleophile is the cysteine 86. Residues histidine 194 and glutamate 196 contribute to the active site.

Part of the FGAM synthase complex composed of 1 PurL, 1 PurQ and 2 PurS subunits.

The protein localises to the cytoplasm. The catalysed reaction is N(2)-formyl-N(1)-(5-phospho-beta-D-ribosyl)glycinamide + L-glutamine + ATP + H2O = 2-formamido-N(1)-(5-O-phospho-beta-D-ribosyl)acetamidine + L-glutamate + ADP + phosphate + H(+). The enzyme catalyses L-glutamine + H2O = L-glutamate + NH4(+). It participates in purine metabolism; IMP biosynthesis via de novo pathway; 5-amino-1-(5-phospho-D-ribosyl)imidazole from N(2)-formyl-N(1)-(5-phospho-D-ribosyl)glycinamide: step 1/2. Its function is as follows. Part of the phosphoribosylformylglycinamidine synthase complex involved in the purines biosynthetic pathway. Catalyzes the ATP-dependent conversion of formylglycinamide ribonucleotide (FGAR) and glutamine to yield formylglycinamidine ribonucleotide (FGAM) and glutamate. The FGAM synthase complex is composed of three subunits. PurQ produces an ammonia molecule by converting glutamine to glutamate. PurL transfers the ammonia molecule to FGAR to form FGAM in an ATP-dependent manner. PurS interacts with PurQ and PurL and is thought to assist in the transfer of the ammonia molecule from PurQ to PurL. This chain is Phosphoribosylformylglycinamidine synthase subunit PurQ, found in Latilactobacillus sakei subsp. sakei (strain 23K) (Lactobacillus sakei subsp. sakei).